The chain runs to 439 residues: General transcription factor IIE subunit 1 (439 aa).

At Ala-2 the chain carries N-acetylalanine. Positions 14-104 constitute an HTH TFE/IIEalpha-type domain; the sequence is LKRLAKYVIR…NYRTLVNVVK (91 aa). Lys-67 is modified (N6-acetyllysine). Cys-129, Cys-132, Cys-154, and Cys-157 together coordinate Zn(2+). The segment at 129-157 adopts a C4-type zinc-finger fold; it reads CPVCSSTFTDLEANQLFDPMTGTFRCTFC. Residue Ser-268 is modified to Phosphoserine. Low complexity predominate over residues 333–344; that stretch reads SSAMAGSVGAAA. The tract at residues 333–392 is disordered; that stretch reads SSAMAGSVGAAAPVTTANGSDSESETSESDDDSPPRPAAVAVHKREEDEEEDDEFEEVAD. Acidic residues-rich tracts occupy residues 354–364 and 379–392; these read SESETSESDDD and EDEE…EVAD.

This sequence belongs to the TFIIE alpha subunit family. Tetramer of two alpha and two beta chains. Interacts with TAF6/TAFII80. Interacts with ATF7IP. Interacts with SND1. Part of TBP-based Pol II pre-initiation complex (PIC), in which Pol II core assembles with general transcription factors and other specific initiation factors including GTF2E1, GTF2E2, GTF2F1, GTF2F2, TCEA1, ERCC2, ERCC3, GTF2H2, GTF2H3, GTF2H4, GTF2H5, GTF2A1, GTF2A2, GTF2B and TBP; this large multi-subunit PIC complex mediates DNA unwinding and targets Pol II core to the transcription start site where the first phosphodiester bond forms.

The protein resides in the nucleus. In terms of biological role, recruits TFIIH to the initiation complex and stimulates the RNA polymerase II C-terminal domain kinase and DNA-dependent ATPase activities of TFIIH. Both TFIIH and TFIIE are required for promoter clearance by RNA polymerase. The polypeptide is General transcription factor IIE subunit 1 (GTF2E1) (Pongo abelii (Sumatran orangutan)).